The primary structure comprises 428 residues: D-amino acid dehydrogenase (428 aa).

An FAD-binding site is contributed by 3 to 17 (VVILGSGVVGVASAY).

The protein belongs to the DadA oxidoreductase family. It depends on FAD as a cofactor.

It catalyses the reaction a D-alpha-amino acid + A + H2O = a 2-oxocarboxylate + AH2 + NH4(+). It participates in amino-acid degradation; D-alanine degradation; NH(3) and pyruvate from D-alanine: step 1/1. Oxidative deamination of D-amino acids. This is D-amino acid dehydrogenase from Burkholderia thailandensis (strain ATCC 700388 / DSM 13276 / CCUG 48851 / CIP 106301 / E264).